We begin with the raw amino-acid sequence, 462 residues long: L-seryl-tRNA(Sec) selenium transferase (462 aa).

At Lys-294 the chain carries N6-(pyridoxal phosphate)lysine.

This sequence belongs to the SelA family. In terms of assembly, homodecamer; pentamer of dimers. Binds only one seryl-tRNA(Sec) per dimer. The cofactor is pyridoxal 5'-phosphate.

Its subcellular location is the cytoplasm. The catalysed reaction is L-seryl-tRNA(Sec) + selenophosphate + H(+) = L-selenocysteinyl-tRNA(Sec) + phosphate. The protein operates within aminoacyl-tRNA biosynthesis; selenocysteinyl-tRNA(Sec) biosynthesis; selenocysteinyl-tRNA(Sec) from L-seryl-tRNA(Sec) (bacterial route): step 1/1. Functionally, converts seryl-tRNA(Sec) to selenocysteinyl-tRNA(Sec) required for selenoprotein biosynthesis. The polypeptide is L-seryl-tRNA(Sec) selenium transferase (Yersinia pestis bv. Antiqua (strain Antiqua)).